A 122-amino-acid polypeptide reads, in one-letter code: NADH-quinone oxidoreductase subunit A (122 aa).

The next 3 membrane-spanning stretches (helical) occupy residues 10-30 (LIVF…LTIG), 67-87 (FALL…WAVV), and 91-111 (LGLF…IGLI).

Belongs to the complex I subunit 3 family. In terms of assembly, NDH-1 is composed of 14 different subunits. Subunits NuoA, H, J, K, L, M, N constitute the membrane sector of the complex.

It localises to the cell membrane. It catalyses the reaction a quinone + NADH + 5 H(+)(in) = a quinol + NAD(+) + 4 H(+)(out). Functionally, NDH-1 shuttles electrons from NADH, via FMN and iron-sulfur (Fe-S) centers, to quinones in the respiratory chain. The immediate electron acceptor for the enzyme in this species is believed to be a menaquinone. Couples the redox reaction to proton translocation (for every two electrons transferred, four hydrogen ions are translocated across the cytoplasmic membrane), and thus conserves the redox energy in a proton gradient. This chain is NADH-quinone oxidoreductase subunit A, found in Geobacillus thermodenitrificans (strain NG80-2).